The sequence spans 161 residues: Ribonuclease P protein component (161 aa).

The protein belongs to the RnpA family. Consists of a catalytic RNA component (M1 or rnpB) and a protein subunit.

The catalysed reaction is Endonucleolytic cleavage of RNA, removing 5'-extranucleotides from tRNA precursor.. Its function is as follows. RNaseP catalyzes the removal of the 5'-leader sequence from pre-tRNA to produce the mature 5'-terminus. It can also cleave other RNA substrates such as 4.5S RNA. The protein component plays an auxiliary but essential role in vivo by binding to the 5'-leader sequence and broadening the substrate specificity of the ribozyme. This chain is Ribonuclease P protein component, found in Helicobacter pylori (strain J99 / ATCC 700824) (Campylobacter pylori J99).